The sequence spans 457 residues: Bifunctional protein GlmU (457 aa).

Residues 1 to 229 (MDLAAVILAA…PVEVTGINDR (229 aa)) are pyrophosphorylase. Residues 8–11 (LAAG), lysine 22, glutamine 72, and 77–78 (GT) each bind UDP-N-acetyl-alpha-D-glucosamine. Aspartate 102 provides a ligand contact to Mg(2+). UDP-N-acetyl-alpha-D-glucosamine contacts are provided by glycine 139, glutamate 154, asparagine 169, and asparagine 227. Asparagine 227 is a Mg(2+) binding site. A linker region spans residues 230 to 250 (RQLAEVEKYLRRRVLEDLMQS). The segment at 251–457 (GVTVLDPAST…WAAKKRDKKV (207 aa)) is N-acetyltransferase. UDP-N-acetyl-alpha-D-glucosamine is bound by residues arginine 332 and lysine 350. The Proton acceptor role is filled by histidine 362. Residues tyrosine 365 and asparagine 376 each contribute to the UDP-N-acetyl-alpha-D-glucosamine site. Residues 385–386 (NY), serine 404, alanine 422, and arginine 439 contribute to the acetyl-CoA site.

The protein in the N-terminal section; belongs to the N-acetylglucosamine-1-phosphate uridyltransferase family. In the C-terminal section; belongs to the transferase hexapeptide repeat family. As to quaternary structure, homotrimer. The cofactor is Mg(2+).

Its subcellular location is the cytoplasm. It carries out the reaction alpha-D-glucosamine 1-phosphate + acetyl-CoA = N-acetyl-alpha-D-glucosamine 1-phosphate + CoA + H(+). It catalyses the reaction N-acetyl-alpha-D-glucosamine 1-phosphate + UTP + H(+) = UDP-N-acetyl-alpha-D-glucosamine + diphosphate. The protein operates within nucleotide-sugar biosynthesis; UDP-N-acetyl-alpha-D-glucosamine biosynthesis; N-acetyl-alpha-D-glucosamine 1-phosphate from alpha-D-glucosamine 6-phosphate (route II): step 2/2. Its pathway is nucleotide-sugar biosynthesis; UDP-N-acetyl-alpha-D-glucosamine biosynthesis; UDP-N-acetyl-alpha-D-glucosamine from N-acetyl-alpha-D-glucosamine 1-phosphate: step 1/1. It participates in bacterial outer membrane biogenesis; LPS lipid A biosynthesis. Functionally, catalyzes the last two sequential reactions in the de novo biosynthetic pathway for UDP-N-acetylglucosamine (UDP-GlcNAc). The C-terminal domain catalyzes the transfer of acetyl group from acetyl coenzyme A to glucosamine-1-phosphate (GlcN-1-P) to produce N-acetylglucosamine-1-phosphate (GlcNAc-1-P), which is converted into UDP-GlcNAc by the transfer of uridine 5-monophosphate (from uridine 5-triphosphate), a reaction catalyzed by the N-terminal domain. This is Bifunctional protein GlmU from Pelotomaculum thermopropionicum (strain DSM 13744 / JCM 10971 / SI).